The chain runs to 92 residues: Small ribosomal subunit protein uS19 (92 aa).

It belongs to the universal ribosomal protein uS19 family.

Functionally, protein S19 forms a complex with S13 that binds strongly to the 16S ribosomal RNA. This chain is Small ribosomal subunit protein uS19, found in Lysinibacillus sphaericus (strain C3-41).